The sequence spans 381 residues: Cobalt-precorrin-5B C(1)-methyltransferase (381 aa).

Belongs to the CbiD family.

The catalysed reaction is Co-precorrin-5B + S-adenosyl-L-methionine = Co-precorrin-6A + S-adenosyl-L-homocysteine. The protein operates within cofactor biosynthesis; adenosylcobalamin biosynthesis; cob(II)yrinate a,c-diamide from sirohydrochlorin (anaerobic route): step 6/10. Functionally, catalyzes the methylation of C-1 in cobalt-precorrin-5B to form cobalt-precorrin-6A. The polypeptide is Cobalt-precorrin-5B C(1)-methyltransferase (Prochlorococcus marinus (strain NATL1A)).